Consider the following 173-residue polypeptide: Shikimate kinase (173 aa).

11 to 16 provides a ligand contact to ATP; that stretch reads GTGKTS. Position 15 (Thr15) interacts with Mg(2+). Residues Asp33, Arg57, and Gly79 each coordinate substrate. An ATP-binding site is contributed by Arg117. Arg136 lines the substrate pocket.

Belongs to the shikimate kinase family. In terms of assembly, monomer. Requires Mg(2+) as cofactor.

It is found in the cytoplasm. The enzyme catalyses shikimate + ATP = 3-phosphoshikimate + ADP + H(+). Its pathway is metabolic intermediate biosynthesis; chorismate biosynthesis; chorismate from D-erythrose 4-phosphate and phosphoenolpyruvate: step 5/7. Catalyzes the specific phosphorylation of the 3-hydroxyl group of shikimic acid using ATP as a cosubstrate. The protein is Shikimate kinase of Thermodesulfovibrio yellowstonii (strain ATCC 51303 / DSM 11347 / YP87).